A 252-amino-acid polypeptide reads, in one-letter code: Phosphate import ATP-binding protein PstB 1 (252 aa).

The 242-residue stretch at 6–247 folds into the ABC transporter domain; it reads LQIRDLSVYY…PKRKETEDYI (242 aa). 38–45 is an ATP binding site; sequence GPSGSGKS.

This sequence belongs to the ABC transporter superfamily. Phosphate importer (TC 3.A.1.7) family. As to quaternary structure, the complex is composed of two ATP-binding proteins (PstB), two transmembrane proteins (PstC and PstA) and a solute-binding protein (PstS).

It is found in the cell membrane. The enzyme catalyses phosphate(out) + ATP + H2O = ADP + 2 phosphate(in) + H(+). In terms of biological role, part of the ABC transporter complex PstSACB involved in phosphate import. Responsible for energy coupling to the transport system. This chain is Phosphate import ATP-binding protein PstB 1, found in Streptococcus pyogenes serotype M6 (strain ATCC BAA-946 / MGAS10394).